The following is a 431-amino-acid chain: Enolase (431 aa).

Glutamine 163 contributes to the (2R)-2-phosphoglycerate binding site. Glutamate 205 serves as the catalytic Proton donor. Aspartate 242, glutamate 288, and aspartate 315 together coordinate Mg(2+). (2R)-2-phosphoglycerate-binding residues include lysine 340, arginine 369, serine 370, and lysine 391. The active-site Proton acceptor is lysine 340.

The protein belongs to the enolase family. Mg(2+) is required as a cofactor.

The protein resides in the cytoplasm. It localises to the secreted. Its subcellular location is the cell surface. It catalyses the reaction (2R)-2-phosphoglycerate = phosphoenolpyruvate + H2O. It participates in carbohydrate degradation; glycolysis; pyruvate from D-glyceraldehyde 3-phosphate: step 4/5. Its function is as follows. Catalyzes the reversible conversion of 2-phosphoglycerate (2-PG) into phosphoenolpyruvate (PEP). It is essential for the degradation of carbohydrates via glycolysis. The polypeptide is Enolase (Bacillus cereus (strain G9842)).